The chain runs to 255 residues: Imidazole glycerol phosphate synthase subunit HisF (255 aa).

Active-site residues include aspartate 11 and aspartate 130.

The protein belongs to the HisA/HisF family. As to quaternary structure, heterodimer of HisH and HisF.

Its subcellular location is the cytoplasm. The enzyme catalyses 5-[(5-phospho-1-deoxy-D-ribulos-1-ylimino)methylamino]-1-(5-phospho-beta-D-ribosyl)imidazole-4-carboxamide + L-glutamine = D-erythro-1-(imidazol-4-yl)glycerol 3-phosphate + 5-amino-1-(5-phospho-beta-D-ribosyl)imidazole-4-carboxamide + L-glutamate + H(+). Its pathway is amino-acid biosynthesis; L-histidine biosynthesis; L-histidine from 5-phospho-alpha-D-ribose 1-diphosphate: step 5/9. In terms of biological role, IGPS catalyzes the conversion of PRFAR and glutamine to IGP, AICAR and glutamate. The HisF subunit catalyzes the cyclization activity that produces IGP and AICAR from PRFAR using the ammonia provided by the HisH subunit. The polypeptide is Imidazole glycerol phosphate synthase subunit HisF (Campylobacter jejuni (strain RM1221)).